Here is a 206-residue protein sequence, read N- to C-terminus: Large ribosomal subunit protein uL4 (206 aa).

The disordered stretch occupies residues Ala-43 to Ser-78. Residues Lys-49–His-58 show a composition bias toward basic and acidic residues. The span at Thr-59–Gly-70 shows a compositional bias: basic residues.

It belongs to the universal ribosomal protein uL4 family. In terms of assembly, part of the 50S ribosomal subunit.

One of the primary rRNA binding proteins, this protein initially binds near the 5'-end of the 23S rRNA. It is important during the early stages of 50S assembly. It makes multiple contacts with different domains of the 23S rRNA in the assembled 50S subunit and ribosome. Functionally, forms part of the polypeptide exit tunnel. The sequence is that of Large ribosomal subunit protein uL4 from Ralstonia pickettii (strain 12J).